The following is a 394-amino-acid chain: MGGTAARLGAVILFVVIVGLHGVRGKYALADASLKMADPNRFRGKDLPVLDQLTDPPGVRRVYHIQAGLPDPFQPPSLPITVYYAVLERACRSVLLNAPSEAPQIVRGASEDVRKQPYNLTIAWFRMGGNCAIPITVMEYTECSYNKSLGACPIRTQPRWNYYDSFSAVSEDNLGFLMHAPAFETAGTYLRLVKINDWTEITQFILEHRAKGSCKYALPLRIPPSACLSPQAYQQGVTVDSIGMLPRFIPENQRTVAVYSLKIAGWHGPKAPYTSTLLPPELSETPNATQPELAPEDPEDSALLEDPVGTVAPQIPPNWHIPSIQDAATPYHPPATPNNMGLIAGAVGGSLLAALVICGIVYWMHRRTRKAPKRIRLPHIREDDQPSSHQPLFY.

The signal sequence occupies residues 1–25 (MGGTAARLGAVILFVVIVGLHGVRG). The segment at 25-57 (GKYALADASLKMADPNRFRGKDLPVLDQLTDPP) is interaction with TNFRSF14. Residues 26–339 (KYALADASLK…PYHPPATPNN (314 aa)) are Virion surface-facing. Histidine 64 contributes to the Zn(2+) binding site. Disulfide bonds link cysteine 91/cysteine 214, cysteine 131/cysteine 227, and cysteine 143/cysteine 152. 2 N-linked (GlcNAc...) asparagine; by host glycosylation sites follow: asparagine 119 and asparagine 146. Residue aspartate 240 participates in Zn(2+) binding. Residues 261-305 (LKIAGWHGPKAPYTSTLLPPELSETPNATQPELAPEDPEDSALLE) form a profusion region. A disordered region spans residues 275 to 301 (STLLPPELSETPNATQPELAPEDPEDS). The N-linked (GlcNAc...) asparagine; by host glycan is linked to asparagine 287. Residues 340 to 364 (MGLIAGAVGGSLLAALVICGIVYWM) form a helical membrane-spanning segment. Topologically, residues 365–394 (HRRTRKAPKRIRLPHIREDDQPSSHQPLFY) are intravirion.

It belongs to the herpesviridae glycoprotein D family. Homodimer. Interacts with host receptor TNFRSF14. Interacts with host receptor NECTIN1. Interacts (via profusion domain) with gB; this interaction occurs in the absence of gH/gL. Interacts (via profusion domain) with gH/gL heterodimer; this interaction occurs in the absence of gB. Associates with the gB-gH/gL-gD complex. Interacts (via C-terminus) with UL11 tegument protein. Interacts with host RSAD2.

It localises to the virion membrane. The protein localises to the host Golgi apparatus. In terms of biological role, envelope glycoprotein that binds to the host cell entry receptors NECTIN1, TNFRSF14/HVEM and 3-O-sulfated heparan sulfate, promoting the virus entry into host cells. May trigger fusion with host membrane, by recruiting the fusion machinery composed of gB and gH/gL. This chain is Envelope glycoprotein D (gD), found in Human herpesvirus 1 (strain Patton) (HHV-1).